The sequence spans 185 residues: Pap fimbrial major pilin protein (185 aa).

The N-terminal stretch at 1–22 (MIKSVIAGAVAMAVVSFGVNNA) is a signal peptide. Residues cysteine 44 and cysteine 83 are joined by a disulfide bond.

Belongs to the fimbrial protein family.

It is found in the secreted. The protein resides in the fimbrium. Polymerizes to form the thick (6.8 nm in diameter) rod of the pilus (also called fimbria). The rod is a right-handed helical cylinder with 3.28 PapA subunits per turn. Pili are polar filaments radiating from the surface of the bacterium to a length of 0.5-1.5 micrometers and numbering 100-300 per cell, and enable bacteria to colonize the epithelium of specific host organs. The protein is Pap fimbrial major pilin protein (papA) of Escherichia coli.